A 161-amino-acid polypeptide reads, in one-letter code: Allophycocyanin alpha chain 1 (161 aa).

Asn-71 is subject to N4-methylasparagine. Cys-81 is a binding site for (2R,3E)-phycocyanobilin.

Belongs to the phycobiliprotein family. As to quaternary structure, component of the phycobilisome. Heterodimer of an alpha and a beta chain. Post-translationally, contains one covalently linked bilin chromophore.

It localises to the cellular thylakoid membrane. Its function is as follows. Light-harvesting photosynthetic bile pigment-protein from the phycobiliprotein complex. Allophycocyanin has a maximum absorption at approximately 650 nanometers. The protein is Allophycocyanin alpha chain 1 of Microchaete diplosiphon (Fremyella diplosiphon).